A 354-amino-acid polypeptide reads, in one-letter code: MKIKEITIWKEDLALTRPYTIAYETISAVENVFVLLETDNGITGIGAGSPAEDVTGETITATETALSLKLAPILQGKDIRSCFSLLKELNTALADTPAALAAADIALHDLAAKTMGLPLVDLLGRVHDRLPTSITIGIMPVKETLAEAEEYLGRGFSILKIKTGLNVEEDIERIIRLNETFKSKICMRVDANQGYEVEELHHFFKKTVGLVEFIEQPLKAEHLEKMGQLPQAIRRVSAADETLLGPRDAAQMLHAPRPFGIFNIKLMKCGGIAPGLEIANMAGHADIDLMWGCMDESIVSIAGALHAAFSSRATRYLDLDGSLDLARDIVNGGFILENGWMRTTDQPGLGVKRI.

Residues Thr-135 and 160–162 (KIK) each bind substrate. Residues Asp-190, Glu-215, and Asp-240 each coordinate Mg(2+). Residues Lys-265, Asp-295, and 318–320 (DLD) each bind substrate.

It belongs to the mandelate racemase/muconate lactonizing enzyme family. Requires Mg(2+) as cofactor.

Its function is as follows. Catalyzes the epimerization of L-Lys-L-Arg to L-Lys-D-Arg (in vitro). Catalyzes the epimerization of positively charged dipeptides, with a preference for substrates with a basic amino acid in the second position. Has epimerase activity with L-Lys-L-Lys, L-Arg-L-Arg, L-Val-L-Arg, L-Val-L-Lys and L-Ala-L-Arg (in vitro). In Desulforapulum autotrophicum (strain ATCC 43914 / DSM 3382 / VKM B-1955 / HRM2) (Desulfobacterium autotrophicum), this protein is L-Lys-D/L-Arg epimerase.